The following is a 553-amino-acid chain: Pseudouridylate synthase RPUSD2 (553 aa).

Residues Ala-76–Ser-135 form a disordered region. Residue Asp-287 is part of the active site. The residue at position 490 (Thr-490) is a Phosphothreonine.

Belongs to the pseudouridine synthase RluA family.

It catalyses the reaction a uridine in mRNA = a pseudouridine in mRNA. Functionally, pseudouridine synthase that catalyzes pseudouridylation of mRNAs. The protein is Pseudouridylate synthase RPUSD2 of Mus musculus (Mouse).